The following is a 249-amino-acid chain: Isoprenyl transferase (249 aa).

The active site involves Asp29. Asp29 is a Mg(2+) binding site. Residues 30 to 33 (GNGR), Trp34, Arg42, His46, and 74 to 76 (STE) each bind substrate. Residue Asn77 is the Proton acceptor of the active site. Substrate is bound by residues Trp78, Arg80, Arg197, and 203–205 (RLS). Residue Glu216 participates in Mg(2+) binding.

It belongs to the UPP synthase family. As to quaternary structure, homodimer. Requires Mg(2+) as cofactor.

Catalyzes the condensation of isopentenyl diphosphate (IPP) with allylic pyrophosphates generating different type of terpenoids. This chain is Isoprenyl transferase, found in Trichormus variabilis (strain ATCC 29413 / PCC 7937) (Anabaena variabilis).